Reading from the N-terminus, the 101-residue chain is Urease subunit beta (101 aa).

Belongs to the urease beta subunit family. As to quaternary structure, heterotrimer of UreA (gamma), UreB (beta) and UreC (alpha) subunits. Three heterotrimers associate to form the active enzyme.

The protein localises to the cytoplasm. The enzyme catalyses urea + 2 H2O + H(+) = hydrogencarbonate + 2 NH4(+). It functions in the pathway nitrogen metabolism; urea degradation; CO(2) and NH(3) from urea (urease route): step 1/1. The polypeptide is Urease subunit beta (Pseudomonas fluorescens (strain ATCC BAA-477 / NRRL B-23932 / Pf-5)).